The primary structure comprises 276 residues: Protein MGF 360-15R (276 aa).

This sequence belongs to the asfivirus MGF 360 family.

Functionally, plays a role in virus cell tropism, and may be required for efficient virus replication in macrophages. This is Protein MGF 360-15R from Ornithodoros (relapsing fever ticks).